Consider the following 212-residue polypeptide: Tubulin alpha chain (212 aa).

2 residues coordinate GTP: asparagine 3 and asparagine 25. Glutamate 51 is an active-site residue.

The protein belongs to the tubulin family. As to quaternary structure, dimer of alpha and beta chains. A typical microtubule is a hollow water-filled tube with an outer diameter of 25 nm and an inner diameter of 15 nM. Alpha-beta heterodimers associate head-to-tail to form protofilaments running lengthwise along the microtubule wall with the beta-tubulin subunit facing the microtubule plus end conferring a structural polarity. Microtubules usually have 13 protofilaments but different protofilament numbers can be found in some organisms and specialized cells. It depends on Mg(2+) as a cofactor.

It is found in the cytoplasm. It localises to the cytoskeleton. It carries out the reaction GTP + H2O = GDP + phosphate + H(+). Its function is as follows. Tubulin is the major constituent of microtubules, a cylinder consisting of laterally associated linear protofilaments composed of alpha- and beta-tubulin heterodimers. Microtubules grow by the addition of GTP-tubulin dimers to the microtubule end, where a stabilizing cap forms. Below the cap, tubulin dimers are in GDP-bound state, owing to GTPase activity of alpha-tubulin. The chain is Tubulin alpha chain (TUB-A) from Pneumocystis carinii.